The following is a 249-amino-acid chain: Exosome complex component Rrp41 (249 aa).

This sequence belongs to the RNase PH family. Rrp41 subfamily. As to quaternary structure, component of the archaeal exosome complex. Forms a hexameric ring-like arrangement composed of 3 Rrp41-Rrp42 heterodimers. The hexameric ring associates with a trimer of Rrp4 and/or Csl4 subunits.

Its subcellular location is the cytoplasm. Functionally, catalytic component of the exosome, which is a complex involved in RNA degradation. Has 3'-&gt;5' exoribonuclease activity. Can also synthesize heteromeric RNA-tails. The polypeptide is Exosome complex component Rrp41 (Thermococcus gammatolerans (strain DSM 15229 / JCM 11827 / EJ3)).